The primary structure comprises 740 residues: Ethylene receptor 1 (740 aa).

The next 3 helical transmembrane spans lie at 23–43 (ISDF…IYFV), 53–73 (WVLV…LINL), and 95–115 (AAVS…LLSV). Cu cation-binding residues include Cys65 and His69. The region spanning 158–307 (DRHTILKTTL…VVADQVAVAL (150 aa)) is the GAF domain. One can recognise a Histidine kinase domain in the interval 350-587 (VMNHEMRTPM…TVTFVVKLGI (238 aa)). Phosphohistidine; by autocatalysis is present on His353. A Response regulatory domain is found at 615 to 732 (KVLLMDENGI…KMRNVLSKLL (118 aa)). 4-aspartylphosphate is present on Asp663.

Belongs to the ethylene receptor family. In terms of assembly, homodimer; disulfide-linked. Cu cation serves as cofactor. Activation probably requires a transfer of a phosphate group between a His in the transmitter domain and an Asp of the receiver domain.

It localises to the endoplasmic reticulum membrane. The catalysed reaction is ATP + protein L-histidine = ADP + protein N-phospho-L-histidine.. May act early in the ethylene signal transduction pathway, possibly as an ethylene receptor, or as a regulator of the pathway. In Pelargonium hortorum (Common geranium), this protein is Ethylene receptor 1 (ETR1).